The primary structure comprises 207 residues: GILT-like protein 2 (207 aa).

A signal peptide spans 1 to 19 (MRAAVFVCLLLGWVGVATP). The cysteines at positions 40 and 43 are disulfide-linked. Asparagine 182 carries an N-linked (GlcNAc...) asparagine glycan.

This sequence belongs to the GILT family.

Its subcellular location is the secreted. In terms of biological role, probable lysosomal thiol reductase that can reduce protein disulfide bonds. Involved in the immune response to bacterial infection. The sequence is that of GILT-like protein 2 from Drosophila melanogaster (Fruit fly).